Reading from the N-terminus, the 533-residue chain is Bifunctional purine biosynthesis protein PurH (533 aa).

Residues methionine 1 to valine 148 enclose the MGS-like domain.

The protein belongs to the PurH family.

The catalysed reaction is (6R)-10-formyltetrahydrofolate + 5-amino-1-(5-phospho-beta-D-ribosyl)imidazole-4-carboxamide = 5-formamido-1-(5-phospho-D-ribosyl)imidazole-4-carboxamide + (6S)-5,6,7,8-tetrahydrofolate. The enzyme catalyses IMP + H2O = 5-formamido-1-(5-phospho-D-ribosyl)imidazole-4-carboxamide. It participates in purine metabolism; IMP biosynthesis via de novo pathway; 5-formamido-1-(5-phospho-D-ribosyl)imidazole-4-carboxamide from 5-amino-1-(5-phospho-D-ribosyl)imidazole-4-carboxamide (10-formyl THF route): step 1/1. It functions in the pathway purine metabolism; IMP biosynthesis via de novo pathway; IMP from 5-formamido-1-(5-phospho-D-ribosyl)imidazole-4-carboxamide: step 1/1. In Pasteurella multocida (strain Pm70), this protein is Bifunctional purine biosynthesis protein PurH.